Reading from the N-terminus, the 732-residue chain is MAP7 domain-containing protein 2 (732 aa).

M1 is modified (N-acetylmethionine). Positions 1–10 are enriched in gly residues; that stretch reads MERGGGGSGT. 5 disordered regions span residues 1 to 64, 95 to 123, 157 to 186, 210 to 244, and 279 to 509; these read MERG…RREE, WRKL…LREE, PGGH…KRLS, GPLN…GKEA, and EFSG…KQKE. Residues 49–64 show a composition bias toward basic and acidic residues; the sequence is LKSDERQRLAKERREE. The stretch at 51-146 forms a coiled coil; the sequence is SDERQRLAKE…RTQQLELKKK (96 aa). Basic and acidic residues predominate over residues 329–345; that stretch reads MPKRKAEKEKSNKEREG. The span at 347–357 shows a compositional bias: low complexity; sequence LAQQAAGPQGE. Positions 359 to 374 are enriched in basic and acidic residues; that stretch reads ALEKHVVDKHASEKHA. Positions 375–386 are enriched in low complexity; the sequence is AAAGGKAENSAA. Positions 404 to 509 are enriched in basic and acidic residues; the sequence is LAEKRRQARL…EKAMIEKQKE (106 aa).

The protein belongs to the MAP7 family. As to quaternary structure, interacts (via N-terminus) with microtubules; facilitates microtubule stabilization. Interacts with kinesin-1 family members, KIF5A, KIF5B and KIF5C.

The protein localises to the cytoplasm. Its subcellular location is the cytoskeleton. It is found in the microtubule organizing center. The protein resides in the centrosome. It localises to the midbody. The protein localises to the cell projection. Its subcellular location is the neuron projection. It is found in the axon. In terms of biological role, microtubule-stabilizing protein that plays a role in the control of cell motility and neurite outgrowth via direct binding to the microtubule. Acts as a critical cofactor for kinesin transport. In the proximal axon, regulates kinesin-1 family members, KIF5A, KIF5B and KIF5C recruitment to microtubules and contributes to kinesin-1-mediated transport in the axons. The sequence is that of MAP7 domain-containing protein 2 (MAP7D2) from Homo sapiens (Human).